A 224-amino-acid polypeptide reads, in one-letter code: Cytidylate kinase (224 aa).

Residue 9–17 coordinates ATP; it reads GPSGVGKGT.

It belongs to the cytidylate kinase family. Type 1 subfamily.

Its subcellular location is the cytoplasm. It catalyses the reaction CMP + ATP = CDP + ADP. The catalysed reaction is dCMP + ATP = dCDP + ADP. This Dichelobacter nodosus (strain VCS1703A) protein is Cytidylate kinase.